The chain runs to 598 residues: Arginine--tRNA ligase (598 aa).

Residues 131-141 carry the 'HIGH' region motif; sequence ANPTGPMHVGH. Positions 288-309 are disordered; it reads KLPPPKSKKGQPPPQPQPDEEG.

Belongs to the class-I aminoacyl-tRNA synthetase family. As to quaternary structure, monomer.

It localises to the cytoplasm. The catalysed reaction is tRNA(Arg) + L-arginine + ATP = L-arginyl-tRNA(Arg) + AMP + diphosphate. The chain is Arginine--tRNA ligase from Anaeromyxobacter dehalogenans (strain 2CP-1 / ATCC BAA-258).